Consider the following 878-residue polypeptide: Interleukin-3 receptor class 2 subunit beta (878 aa).

Residues Met-1 to Gly-22 form the signal peptide. The Extracellular portion of the chain corresponds to His-23–Trp-440. Cysteines 39 and 49 form a disulfide. The N-linked (GlcNAc...) asparagine glycan is linked to Asn-62. Cys-78 and Cys-95 are oxidised to a cystine. The 106-residue stretch at Pro-139–Gly-244 folds into the Fibronectin type-III 1 domain. A disordered region spans residues Gly-223–Gly-244. Disulfide bonds link Cys-254–Cys-264 and Cys-293–Cys-310. The 96-residue stretch at Gln-343–Thr-438 folds into the Fibronectin type-III 2 domain. N-linked (GlcNAc...) asparagine glycosylation is present at Asn-350. The WSXWS motif signature appears at Trp-427–Ser-431. A helical transmembrane segment spans residues Val-441 to Leu-462. Residues His-463–Tyr-878 lie on the Cytoplasmic side of the membrane. The Box 1 motif motif lies at Trp-476–Ser-484. Disordered stretches follow at residues Leu-539–Leu-620 and Ser-660–Asp-709. Positions Pro-554–Asn-570 are enriched in polar residues. Residues Glu-671 to Asp-689 show a composition bias toward basic and acidic residues. Phosphoserine occurs at positions 752 and 754. Residue Tyr-765 is modified to Phosphotyrosine. Disordered regions lie at residues Ser-771–Glu-810 and Pro-829–Asp-849.

It belongs to the type I cytokine receptor family. Type 4 subfamily. Heterodimer of an alpha and a beta subunit.

It localises to the membrane. In terms of biological role, in mouse, there are two classes of high-affinity IL3 receptors. One contains this IL3-specific beta subunit and the other contains the beta subunit also shared by high-affinity IL5 and GM-CSF receptors. In Mus musculus (Mouse), this protein is Interleukin-3 receptor class 2 subunit beta (Csf2rb2).